The following is a 359-amino-acid chain: Anhydro-N-acetylmuramic acid kinase (359 aa).

An ATP-binding site is contributed by 12–19; that stretch reads GTSLDGVD.

Belongs to the anhydro-N-acetylmuramic acid kinase family.

The catalysed reaction is 1,6-anhydro-N-acetyl-beta-muramate + ATP + H2O = N-acetyl-D-muramate 6-phosphate + ADP + H(+). It functions in the pathway amino-sugar metabolism; 1,6-anhydro-N-acetylmuramate degradation. Its pathway is cell wall biogenesis; peptidoglycan recycling. In terms of biological role, catalyzes the specific phosphorylation of 1,6-anhydro-N-acetylmuramic acid (anhMurNAc) with the simultaneous cleavage of the 1,6-anhydro ring, generating MurNAc-6-P. Is required for the utilization of anhMurNAc either imported from the medium or derived from its own cell wall murein, and thus plays a role in cell wall recycling. The sequence is that of Anhydro-N-acetylmuramic acid kinase from Sulfurovum sp. (strain NBC37-1).